Reading from the N-terminus, the 66-residue chain is Large ribosomal subunit protein bL35 (66 aa).

The segment covering 1 to 15 has biased composition (basic residues); the sequence is MPKMKTKSSAKKRFK. A disordered region spans residues 1-32; it reads MPKMKTKSSAKKRFKMTATGKVRAGQAGKRHG.

Belongs to the bacterial ribosomal protein bL35 family.

This Dinoroseobacter shibae (strain DSM 16493 / NCIMB 14021 / DFL 12) protein is Large ribosomal subunit protein bL35.